We begin with the raw amino-acid sequence, 696 residues long: MLLGALRMEERKGLMGRERDQFPVGMRVLAVDDDPVCLKVLETLLRRCQYHVTSTNQAITALKLLRENRDMFDLVISDVHMPDMDGFKLLELVGLEMDLPVIMLSVNGETKTVMKGITHGACDYLLKPVRIEELRNIWQHVVRRKFGNRERNNLDFSKECNKPQSADTDHGPYQPTCGSSDQNGRSSRKRKELHGEDDDEGDDNDYQENDEPSAAKKPRVVWSVELHRKFVAAVNQLGIDKAVPKRILELMNVEKLTRENVASHLQKYRLYLKRLGAVASQQASIVAAFGGRDPSFLHIGAFEGLQSYQPFAPSAALPSFNPHGLLTRTSAAAAFGLQELAAPSSTIQTSTGNVTVGHCLEENQQANLAQGLTAAIGQPQLQQNWIHQEGNGLSDVFSGSSLTNTLSSTLQRVPSSSLPPQELLECKQAKVSMPPSIRIPPSSSALLERTLGVSTNLGDSSISQQGALPIDGGFSADRLPLHSSFDGAVATKLDTSLAASQREIGQQGKFSVSMLVSPSDNLALAKNAKTGASSSGSTIILPLDTARHSDYLQFGGASNSLQKMDGQKQDHIQSSNIIWSSMPSTQLPSDTQIHNTQSQRLDSGSFNHNIGAHLADQTNASASILPQMKFDTRISEEKMKQKNTYDLGSSKLQGGFNSSGCNFDGLLNSIIKVEKDDLPFMDNELGCDLFPLGACI.

The Response regulatory domain occupies 27–142 (RVLAVDDDPV…ELRNIWQHVV (116 aa)). D78 carries the post-translational modification 4-aspartylphosphate. The segment at 154–214 (LDFSKECNKP…DYQENDEPSA (61 aa)) is disordered. The span at 176 to 185 (TCGSSDQNGR) shows a compositional bias: polar residues. The segment covering 195 to 211 (GEDDDEGDDNDYQENDE) has biased composition (acidic residues). The myb-like GARP DNA-binding region spans 214 to 273 (AAKKPRVVWSVELHRKFVAAVNQLGIDKAVPKRILELMNVEKLTRENVASHLQKYRLYLK).

The protein belongs to the ARR family. Type-B subfamily. In terms of processing, two-component system major event consists of a His-to-Asp phosphorelay between a sensor histidine kinase (HK) and a response regulator (RR). In plants, the His-to-Asp phosphorelay involves an additional intermediate named Histidine-containing phosphotransfer protein (HPt). This multistep phosphorelay consists of a His-Asp-His-Asp sequential transfer of a phosphate group between first a His and an Asp of the HK protein, followed by the transfer to a conserved His of the HPt protein and finally the transfer to an Asp in the receiver domain of the RR protein.

The protein localises to the nucleus. Transcriptional activator that binds specific DNA sequence. Functions as a response regulator involved in His-to-Asp phosphorelay signal transduction system. Phosphorylation of the Asp residue in the receiver domain activates the ability of the protein to promote the transcription of target genes. May directly activate some type-A response regulators in response to cytokinins. The chain is Two-component response regulator ORR22 from Oryza sativa subsp. indica (Rice).